A 123-amino-acid polypeptide reads, in one-letter code: Large ribosomal subunit protein bL12 (123 aa).

The segment at 96 to 123 (NVKEGVSKEEAEGLKKSLEEAGATVELK) is disordered. Positions 100–114 (GVSKEEAEGLKKSLE) are enriched in basic and acidic residues.

This sequence belongs to the bacterial ribosomal protein bL12 family. Homodimer. Part of the ribosomal stalk of the 50S ribosomal subunit. Forms a multimeric L10(L12)X complex, where L10 forms an elongated spine to which 2 to 4 L12 dimers bind in a sequential fashion. Binds GTP-bound translation factors.

Forms part of the ribosomal stalk which helps the ribosome interact with GTP-bound translation factors. Is thus essential for accurate translation. The protein is Large ribosomal subunit protein bL12 of Flavobacterium johnsoniae (strain ATCC 17061 / DSM 2064 / JCM 8514 / BCRC 14874 / CCUG 350202 / NBRC 14942 / NCIMB 11054 / UW101) (Cytophaga johnsonae).